The chain runs to 424 residues: MTVIKKGKNKKKNLKNDDRYKELDSLITNGSEIGDNSGRSCIKRFFKIIGNEMKNNVYVYFLSILYLCVCVMNKVFAKRTLNKMGNYSFVTSETHNIICIVVFQLLYFIYRKTSTSGYKNESQKNFGWQFFLISLLDASTVIISMIGLTRTTGNIQSFIMQLIIPVNMYFCFMFLGYRYHLFNYLGAFIILITIAVVETFLSFETQSENSIIFNLIMISALIPLSFSNMTREVVFKKHKINILRLNAMVVLFQFFTSLLVLPVYNIPFLKEIYMPFSEMSTNINNGLRCLFYGQNTVVENCGVGMVKMCDNCEGAWKTFITFSFFNICDNLLACYIIDKFSTMTYTIVSCIQGPAITIAYYFKFLAGDAVRKPRILDFLTLFGYLFGTIIYRIGNIILEKKKMVKSQNSNDSEAELTCIETSTA.

At 1-56 (MTVIKKGKNKKKNLKNDDRYKELDSLITNGSEIGDNSGRSCIKRFFKIIGNEMKNN) the chain is on the cytoplasmic side. The chain crosses the membrane as a helical span at residues 57-77 (VYVYFLSILYLCVCVMNKVFA). Residues 78 to 88 (KRTLNKMGNYS) are Vacuolar-facing. Residue Asn86 is glycosylated (N-linked (GlcNAc...) asparagine). A helical transmembrane segment spans residues 89–109 (FVTSETHNIICIVVFQLLYFI). Residues 110-125 (YRKTSTSGYKNESQKN) lie on the Cytoplasmic side of the membrane. A helical transmembrane segment spans residues 126–146 (FGWQFFLISLLDASTVIISMI). The Vacuolar segment spans residues 147–156 (GLTRTTGNIQ). The helical transmembrane segment at 157–177 (SFIMQLIIPVNMYFCFMFLGY) threads the bilayer. The Cytoplasmic portion of the chain corresponds to 178-180 (RYH). The chain crosses the membrane as a helical span at residues 181–201 (LFNYLGAFIILITIAVVETFL). At 202–209 (SFETQSEN) the chain is on the vacuolar side. The chain crosses the membrane as a helical span at residues 210–230 (SIIFNLIMISALIPLSFSNMT). Topologically, residues 231-248 (REVVFKKHKINILRLNAM) are cytoplasmic. Residues 249–269 (VVLFQFFTSLLVLPVYNIPFL) traverse the membrane as a helical segment. At 270 to 317 (KEIYMPFSEMSTNINNGLRCLFYGQNTVVENCGVGMVKMCDNCEGAWK) the chain is on the vacuolar side. Intrachain disulfides connect Cys289/Cys312 and Cys301/Cys309. A helical membrane pass occupies residues 318–338 (TFITFSFFNICDNLLACYIID). Topologically, residues 339–346 (KFSTMTYT) are cytoplasmic. The chain crosses the membrane as a helical span at residues 347 to 367 (IVSCIQGPAITIAYYFKFLAG). Residues 368–377 (DAVRKPRILD) lie on the Vacuolar side of the membrane. The helical transmembrane segment at 378–398 (FLTLFGYLFGTIIYRIGNIIL) threads the bilayer. The Cytoplasmic portion of the chain corresponds to 399–424 (EKKKMVKSQNSNDSEAELTCIETSTA).

The protein belongs to the CRT-like transporter family.

The protein localises to the vacuole membrane. Functionally, nutrient transporter. Involved in maintaining the osmotic homeostasis of the digestive vacuole. This chain is Putative chloroquine resistance transporter, found in Plasmodium yoelii yoelii.